We begin with the raw amino-acid sequence, 305 residues long: tRNA uridine(34) hydroxylase (305 aa).

The Rhodanese domain maps to 125-219; that stretch reads ADENTVVVDT…YLEEVPREQS (95 aa). Residue C179 is the Cysteine persulfide intermediate of the active site.

It belongs to the TrhO family.

The enzyme catalyses uridine(34) in tRNA + AH2 + O2 = 5-hydroxyuridine(34) in tRNA + A + H2O. Its function is as follows. Catalyzes oxygen-dependent 5-hydroxyuridine (ho5U) modification at position 34 in tRNAs. In Brucella canis (strain ATCC 23365 / NCTC 10854 / RM-666), this protein is tRNA uridine(34) hydroxylase.